Consider the following 112-residue polypeptide: uncharacterized protein (112 aa).

N29 and N60 each carry an N-linked (GlcNAc...) asparagine; by host glycan. Residues I66 to L86 form a helical membrane-spanning segment.

This sequence belongs to the asfivirus B117L family.

It localises to the host membrane. It is found in the virion. This is an uncharacterized protein from African swine fever virus (isolate Tick/South Africa/Pretoriuskop Pr4/1996) (ASFV).